Here is a 153-residue protein sequence, read N- to C-terminus: Deoxyuridine 5'-triphosphate nucleotidohydrolase (153 aa).

Substrate contacts are provided by residues 65 to 67 (RSG), N78, and 82 to 84 (TID). The segment at 132–153 (MTQRGEGGFGHTGISAVHPRTH) is disordered.

Belongs to the dUTPase family. Requires Mg(2+) as cofactor.

The enzyme catalyses dUTP + H2O = dUMP + diphosphate + H(+). The protein operates within pyrimidine metabolism; dUMP biosynthesis; dUMP from dCTP (dUTP route): step 2/2. In terms of biological role, this enzyme is involved in nucleotide metabolism: it produces dUMP, the immediate precursor of thymidine nucleotides and it decreases the intracellular concentration of dUTP so that uracil cannot be incorporated into DNA. The polypeptide is Deoxyuridine 5'-triphosphate nucleotidohydrolase (Chlorobium limicola (strain DSM 245 / NBRC 103803 / 6330)).